The sequence spans 287 residues: Probable WRKY transcription factor 57 (287 aa).

The segment covering 86-99 has biased composition (low complexity); sequence TSTNNNPSATSSSS. The segment at 86–137 is disordered; sequence TSTNNNPSATSSSSEDPAENSTASAEKTPPPETPVKEKKKAQKRIRQPRFAF. A compositionally biased stretch (basic residues) spans 122–132; the sequence is EKKKAQKRIRQ. The WRKY DNA-binding region spans 141–206; the sequence is SDVDNLEDGY…YEGQHCHQTI (66 aa). The interval 248–287 is disordered; that stretch reads DNNAPSPRLPRPTTEDTPAVSTPSEEGLLGDIVPQTMRNP. Residues 262-271 show a composition bias toward polar residues; that stretch reads EDTPAVSTPS.

This sequence belongs to the WRKY group II-c family.

Its subcellular location is the nucleus. Transcription factor. Interacts specifically with the W box (5'-(T)TGAC[CT]-3'), a frequently occurring elicitor-responsive cis-acting element. The sequence is that of Probable WRKY transcription factor 57 (WRKY57) from Arabidopsis thaliana (Mouse-ear cress).